The chain runs to 480 residues: Proline--tRNA ligase (480 aa).

The protein belongs to the class-II aminoacyl-tRNA synthetase family. ProS type 3 subfamily. As to quaternary structure, homodimer.

It localises to the cytoplasm. The enzyme catalyses tRNA(Pro) + L-proline + ATP = L-prolyl-tRNA(Pro) + AMP + diphosphate. Functionally, catalyzes the attachment of proline to tRNA(Pro) in a two-step reaction: proline is first activated by ATP to form Pro-AMP and then transferred to the acceptor end of tRNA(Pro). The chain is Proline--tRNA ligase from Methanosarcina mazei (strain ATCC BAA-159 / DSM 3647 / Goe1 / Go1 / JCM 11833 / OCM 88) (Methanosarcina frisia).